We begin with the raw amino-acid sequence, 361 residues long: Peptide chain release factor 1 (361 aa).

At Gln-235 the chain carries N5-methylglutamine.

It belongs to the prokaryotic/mitochondrial release factor family. Methylated by PrmC. Methylation increases the termination efficiency of RF1.

The protein localises to the cytoplasm. Peptide chain release factor 1 directs the termination of translation in response to the peptide chain termination codons UAG and UAA. This chain is Peptide chain release factor 1, found in Rhodopseudomonas palustris (strain ATCC BAA-98 / CGA009).